The sequence spans 93 residues: Small ribosomal subunit protein uS19c (93 aa).

It belongs to the universal ribosomal protein uS19 family.

The protein resides in the plastid. The protein localises to the chloroplast. Functionally, protein S19 forms a complex with S13 that binds strongly to the 16S ribosomal RNA. This chain is Small ribosomal subunit protein uS19c, found in Tetradesmus obliquus (Green alga).